The chain runs to 147 residues: Hemoglobin subunit beta-2 (147 aa).

Val-2 carries the post-translational modification N-acetylvaline. One can recognise a Globin domain in the interval 3-147 (HLTDAEKSAV…VATALAHKYH (145 aa)). The residue at position 18 (Lys-18) is an N6-succinyllysine. Position 42 is a phosphotyrosine (Tyr-42). Phosphoserine is present on residues Ser-45, Ser-51, and Ser-53. Lys-60 carries the N6-succinyllysine modification. Heme b is bound by residues His-64 and His-93. Arg-105 carries the asymmetric dimethylarginine modification. Thr-124 bears the Phosphothreonine mark.

Belongs to the globin family. As to quaternary structure, heterotetramer of two alpha chains and two beta chains. As to expression, red blood cells.

Functionally, involved in oxygen transport from the lung to the various peripheral tissues. The chain is Hemoglobin subunit beta-2 (Hbb-b2) from Mus musculus (Mouse).